The following is a 520-amino-acid chain: Maturase K (520 aa).

This sequence belongs to the intron maturase 2 family. MatK subfamily.

Its subcellular location is the plastid. It is found in the chloroplast. Usually encoded in the trnK tRNA gene intron. Probably assists in splicing its own and other chloroplast group II introns. In Liriope muscari (Big blue lilyturf), this protein is Maturase K.